The chain runs to 95 residues: Small ribosomal subunit protein bS6 (95 aa).

It belongs to the bacterial ribosomal protein bS6 family.

Its function is as follows. Binds together with bS18 to 16S ribosomal RNA. This chain is Small ribosomal subunit protein bS6, found in Nocardia farcinica (strain IFM 10152).